A 153-amino-acid chain; its full sequence is Histone H2A (153 aa).

Disordered regions lie at residues 1–27 (MDTG…VSRS) and 131–153 (KAAA…PKKA). Residues 132-147 (AAAAATKEPKSPAKAT) are compositionally biased toward low complexity. Residues 149–152 (SPKK) carry the SPKK motif motif.

It belongs to the histone H2A family. In terms of assembly, the nucleosome is a histone octamer containing two molecules each of H2A, H2B, H3 and H4 assembled in one H3-H4 heterotetramer and two H2A-H2B heterodimers. The octamer wraps approximately 147 bp of DNA.

It localises to the nucleus. Its subcellular location is the chromosome. Functionally, core component of nucleosome. Nucleosomes wrap and compact DNA into chromatin, limiting DNA accessibility to the cellular machineries which require DNA as a template. Histones thereby play a central role in transcription regulation, DNA repair, DNA replication and chromosomal stability. DNA accessibility is regulated via a complex set of post-translational modifications of histones, also called histone code, and nucleosome remodeling. The polypeptide is Histone H2A (Euphorbia esula (Leafy spurge)).